The sequence spans 410 residues: Peptidase T (410 aa).

His-78 is a Zn(2+) binding site. Asp-80 is a catalytic residue. Residue Asp-140 coordinates Zn(2+). Glu-174 serves as the catalytic Proton acceptor. Zn(2+) is bound by residues Glu-175, Asp-197, and His-379.

It belongs to the peptidase M20B family. It depends on Zn(2+) as a cofactor.

The protein resides in the cytoplasm. It catalyses the reaction Release of the N-terminal residue from a tripeptide.. Functionally, cleaves the N-terminal amino acid of tripeptides. This chain is Peptidase T, found in Vibrio atlanticus (strain LGP32) (Vibrio splendidus (strain Mel32)).